The following is a 2448-amino-acid chain: Non-reducing polyketide synthase mapC (2448 aa).

The interval 14–226 (VLFGPQCPDI…HHEAHREGIQ (213 aa)) is N-terminal acylcarrier protein transacylase domain (SAT). Residues 330-350 (GFSNESPQPSTASLSNSVQTF) form a disordered region. In terms of domain architecture, Ketosynthase family 3 (KS3) spans 359 to 775 (ASPIAITGMA…GSNAALIVKE (417 aa)). Catalysis depends on for beta-ketoacyl synthase activity residues cysteine 524, histidine 659, and histidine 698. The segment at 885–1188 (LCFGGQNGLT…HKIDLGGSSG (304 aa)) is malonyl-CoA:ACP transacylase (MAT) domain. Serine 972 (for acyl/malonyl transferase activity) is an active-site residue. The interval 1256–1388 (GQEAGLLCQL…GTVCLHQERS (133 aa)) is N-terminal hotdog fold. The 310-residue stretch at 1256-1565 (GQEAGLLCQL…FTSVSIRSLT (310 aa)) folds into the PKS/mFAS DH domain. The interval 1261-1564 (LLCQLSESPD…RFTSVSIRSL (304 aa)) is product template (PT) domain. Histidine 1290 serves as the catalytic Proton acceptor; for dehydratase activity. The C-terminal hotdog fold stretch occupies residues 1414 to 1565 (ASNGLKGSTV…FTSVSIRSLT (152 aa)). The active-site Proton donor; for dehydratase activity is the aspartate 1471. Residues 1610–1684 (AKDLATVQEM…GLVEHIFPGH (75 aa)) form the Carrier domain. Serine 1644 carries the post-translational modification O-(pantetheine 4'-phosphoryl)serine. The segment at 1841–2076 (PYALEHDLLQ…GFEWVDWTNN (236 aa)) is methyltransferase (CMeT) domain. Active-site for thioesterase activity residues include serine 2227, aspartate 2385, and histidine 2417.

Its subcellular location is the cytoplasm. The protein resides in the cytosol. The enzyme catalyses 3 malonyl-CoA + acetyl-CoA + S-adenosyl-L-methionine + H(+) = 5-methylorsellinate + S-adenosyl-L-homocysteine + 3 CO2 + 4 CoA. It participates in secondary metabolite biosynthesis; terpenoid biosynthesis. Non-reducing polyketide synthase; part of the gene cluster that mediates the biosynthesis of mycophenolic acid (MPA), the first isolated antibiotic natural product in the world obtained from a culture of Penicillium brevicompactum in 1893. MpaC catalyzes the synthesis of 5-methylorsellinic acid (5MOA) via the condensation of 1 acetyl-CoA starter unit with 3 malonyl-CoA units and one methylation step. The first step of the pathway is the synthesis of 5-methylorsellinic acid (5MOA) by the cytosolic polyketide synthase mpaC. 5MOA is then converted to the phthalide compound 5,7-dihydroxy-4,6-dimethylphthalide (DHMP) by the endoplasmic reticulum-bound cytochrome P450 monooxygenase mpaDE. MpaDE first catalyzes hydroxylation of 5-MOA to 4,6-dihydroxy-2-(hydroxymethyl)-3-methylbenzoic acid (DHMB). MpaDE then acts as a lactone synthase that catalyzes the ring closure to convert DHMB into DHMP. The next step is the prenylation of DHMP by the Golgi apparatus-associated prenyltransferase mpaA to yield farnesyl-DHMP (FDHMP). The ER-bound oxygenase mpaB then mediates the oxidative cleavage the C19-C20 double bond in FDHMP to yield FDHMP-3C via a mycophenolic aldehyde intermediate. The O-methyltransferase mpaG catalyzes the methylation of FDHMP-3C to yield MFDHMP-3C. After the cytosolic methylation of FDHMP-3C, MFDHMP-3C enters into peroxisomes probably via free diffusion due to its low molecular weight. Upon a peroxisomal CoA ligation reaction, catalyzed by a beta-oxidation component enzyme acyl-CoA ligase ACL891, MFDHMP-3C-CoA would then be restricted to peroxisomes for the following beta-oxidation pathway steps. The peroxisomal beta-oxidation machinery than converts MFDHMP-3C-CoA into MPA_CoA, via a beta-oxidation chain-shortening process. Finally mpaH acts as a peroxisomal acyl-CoA hydrolase with high substrate specificity toward MPA-CoA to release the final product MPA. The sequence is that of Non-reducing polyketide synthase mapC from Penicillium brevicompactum.